The primary structure comprises 215 residues: Pyrrolidone-carboxylate peptidase 1 (215 aa).

Residues Glu-80, Cys-143, and His-167 contribute to the active site.

This sequence belongs to the peptidase C15 family. In terms of assembly, homotetramer.

The protein localises to the cytoplasm. It carries out the reaction Release of an N-terminal pyroglutamyl group from a polypeptide, the second amino acid generally not being Pro.. Removes 5-oxoproline from various penultimate amino acid residues except L-proline. The sequence is that of Pyrrolidone-carboxylate peptidase 1 from Ralstonia nicotianae (strain ATCC BAA-1114 / GMI1000) (Ralstonia solanacearum).